The primary structure comprises 296 residues: GTPase Era (296 aa).

Positions 7–173 constitute an Era-type G domain; sequence KAGFVSIIGR…VDLVREHLPE (167 aa). The interval 15 to 22 is G1; that stretch reads GRPNVGKS. A GTP-binding site is contributed by 15 to 22; that stretch reads GRPNVGKS. A G2 region spans residues 41–45; that stretch reads QTTRN. The segment at 62–65 is G3; that stretch reads DTPG. GTP-binding positions include 62 to 66 and 122 to 125; these read DTPGI and NKID. Residues 122 to 125 form a G4 region; sequence NKID. The tract at residues 152–154 is G5; sequence ISA. A KH type-2 domain is found at 204 to 281; that stretch reads TNREVPYGTA…YLELFVQVQE (78 aa).

Belongs to the TRAFAC class TrmE-Era-EngA-EngB-Septin-like GTPase superfamily. Era GTPase family. As to quaternary structure, monomer.

Its subcellular location is the cytoplasm. It is found in the cell inner membrane. Its function is as follows. An essential GTPase that binds both GDP and GTP, with rapid nucleotide exchange. Plays a role in 16S rRNA processing and 30S ribosomal subunit biogenesis and possibly also in cell cycle regulation and energy metabolism. The polypeptide is GTPase Era (Trichlorobacter lovleyi (strain ATCC BAA-1151 / DSM 17278 / SZ) (Geobacter lovleyi)).